The primary structure comprises 212 residues: Sentrin-specific protease 8 (212 aa).

N-acetylmethionine is present on M1. A protease region spans residues 11 to 174; that stretch reads SLLRQSDVSL…MYVICNTEAL (164 aa). Active-site residues include H102 and D119. C163 acts as the Nucleophile in catalysis.

This sequence belongs to the peptidase C48 family. In terms of tissue distribution, broadly expressed, with highest levels in kidney and pancreas.

In terms of biological role, protease that catalyzes two essential functions in the NEDD8 pathway: processing of full-length NEDD8 to its mature form and deconjugation of NEDD8 from targeted proteins such as cullins or p53. This chain is Sentrin-specific protease 8 (SENP8), found in Homo sapiens (Human).